Reading from the N-terminus, the 200-residue chain is Holliday junction branch migration complex subunit RuvA (200 aa).

The domain I stretch occupies residues 1–64 (MFTYFRGELI…EDLMQLFGFL (64 aa)). Residues 65 to 143 (EEEERQLFRL…KLRPSGGTKS (79 aa)) are domain II. Residues 144–148 (VSRLS) form a flexible linker region. Residues 148 to 200 (SESSMRDDAVNALVTLGFLRSVAQKAVTESLTSLRNPQVEDLVRDALLTIRTP) are domain III.

The protein belongs to the RuvA family. As to quaternary structure, homotetramer. Forms an RuvA(8)-RuvB(12)-Holliday junction (HJ) complex. HJ DNA is sandwiched between 2 RuvA tetramers; dsDNA enters through RuvA and exits via RuvB. An RuvB hexamer assembles on each DNA strand where it exits the tetramer. Each RuvB hexamer is contacted by two RuvA subunits (via domain III) on 2 adjacent RuvB subunits; this complex drives branch migration. In the full resolvosome a probable DNA-RuvA(4)-RuvB(12)-RuvC(2) complex forms which resolves the HJ.

The protein resides in the cytoplasm. The RuvA-RuvB-RuvC complex processes Holliday junction (HJ) DNA during genetic recombination and DNA repair, while the RuvA-RuvB complex plays an important role in the rescue of blocked DNA replication forks via replication fork reversal (RFR). RuvA specifically binds to HJ cruciform DNA, conferring on it an open structure. The RuvB hexamer acts as an ATP-dependent pump, pulling dsDNA into and through the RuvAB complex. HJ branch migration allows RuvC to scan DNA until it finds its consensus sequence, where it cleaves and resolves the cruciform DNA. This chain is Holliday junction branch migration complex subunit RuvA, found in Chlorobium phaeobacteroides (strain BS1).